The primary structure comprises 265 residues: Undecaprenyl-diphosphatase (265 aa).

A run of 7 helical transmembrane segments spans residues 41-61 (IAYT…LIYF), 75-95 (LKFL…LYVI), 104-124 (YNPS…GIYI), 137-157 (LSTK…LPGV), 180-200 (YSYL…LLFT), 215-235 (GIAL…GFLL), and 244-264 (YLID…GLII).

It belongs to the UppP family.

The protein localises to the cell membrane. It carries out the reaction di-trans,octa-cis-undecaprenyl diphosphate + H2O = di-trans,octa-cis-undecaprenyl phosphate + phosphate + H(+). Functionally, catalyzes the dephosphorylation of undecaprenyl diphosphate (UPP). The chain is Undecaprenyl-diphosphatase from Saccharolobus islandicus (strain Y.G.57.14 / Yellowstone #1) (Sulfolobus islandicus).